The chain runs to 82 residues: MVTIRLARGGAKKRPFYQVVVTDSRSPRDGRFIERVGFFNPIATGKAEALRLDLDRIEHWIGLGATVSDRVSTLIKDAKKVA.

Belongs to the bacterial ribosomal protein bS16 family.

In Photorhabdus laumondii subsp. laumondii (strain DSM 15139 / CIP 105565 / TT01) (Photorhabdus luminescens subsp. laumondii), this protein is Small ribosomal subunit protein bS16.